The following is a 247-amino-acid chain: 3-deoxy-manno-octulosonate cytidylyltransferase (247 aa).

This sequence belongs to the KdsB family.

Its subcellular location is the cytoplasm. The catalysed reaction is 3-deoxy-alpha-D-manno-oct-2-ulosonate + CTP = CMP-3-deoxy-beta-D-manno-octulosonate + diphosphate. Its pathway is nucleotide-sugar biosynthesis; CMP-3-deoxy-D-manno-octulosonate biosynthesis; CMP-3-deoxy-D-manno-octulosonate from 3-deoxy-D-manno-octulosonate and CTP: step 1/1. The protein operates within bacterial outer membrane biogenesis; lipopolysaccharide biosynthesis. Its function is as follows. Activates KDO (a required 8-carbon sugar) for incorporation into bacterial lipopolysaccharide in Gram-negative bacteria. This is 3-deoxy-manno-octulosonate cytidylyltransferase from Chlorobium limicola (strain DSM 245 / NBRC 103803 / 6330).